The sequence spans 136 residues: Large ribosomal subunit protein uL16c (136 aa).

Belongs to the universal ribosomal protein uL16 family. Part of the 50S ribosomal subunit.

It localises to the plastid. Its subcellular location is the chloroplast. This chain is Large ribosomal subunit protein uL16c, found in Citrus sinensis (Sweet orange).